Consider the following 182-residue polypeptide: Probable phosphoheptose isomerase (182 aa).

The 154-residue stretch at 29–182 (ISSAISSGNK…MICAMIDEKF (154 aa)) folds into the SIS domain. 44-46 (NGG) lines the substrate pocket. The Zn(2+) site is built by His-53 and Glu-57. Substrate is bound by residues Glu-57, 86 to 87 (ND), 112 to 114 (STS), Ser-117, and Gln-164. Residues Gln-164 and His-172 each contribute to the Zn(2+) site.

It belongs to the SIS family. GmhA subfamily. The cofactor is Zn(2+).

The protein resides in the cytoplasm. It catalyses the reaction 2 D-sedoheptulose 7-phosphate = D-glycero-alpha-D-manno-heptose 7-phosphate + D-glycero-beta-D-manno-heptose 7-phosphate. It participates in carbohydrate biosynthesis; D-glycero-D-manno-heptose 7-phosphate biosynthesis; D-glycero-alpha-D-manno-heptose 7-phosphate and D-glycero-beta-D-manno-heptose 7-phosphate from sedoheptulose 7-phosphate: step 1/1. Functionally, catalyzes the isomerization of sedoheptulose 7-phosphate in D-glycero-D-manno-heptose 7-phosphate. This is Probable phosphoheptose isomerase from Thermoplasma acidophilum (strain ATCC 25905 / DSM 1728 / JCM 9062 / NBRC 15155 / AMRC-C165).